The following is a 235-amino-acid chain: Aspartate/glutamate leucyltransferase (235 aa).

The protein belongs to the R-transferase family. Bpt subfamily.

The protein resides in the cytoplasm. The catalysed reaction is N-terminal L-glutamyl-[protein] + L-leucyl-tRNA(Leu) = N-terminal L-leucyl-L-glutamyl-[protein] + tRNA(Leu) + H(+). The enzyme catalyses N-terminal L-aspartyl-[protein] + L-leucyl-tRNA(Leu) = N-terminal L-leucyl-L-aspartyl-[protein] + tRNA(Leu) + H(+). Functions in the N-end rule pathway of protein degradation where it conjugates Leu from its aminoacyl-tRNA to the N-termini of proteins containing an N-terminal aspartate or glutamate. In Pseudomonas putida (strain W619), this protein is Aspartate/glutamate leucyltransferase.